Reading from the N-terminus, the 180-residue chain is Large ribosomal subunit protein uL5 (180 aa).

Belongs to the universal ribosomal protein uL5 family. Part of the 50S ribosomal subunit; part of the 5S rRNA/L5/L18/L25 subcomplex. Contacts the 5S rRNA and the P site tRNA. Forms a bridge to the 30S subunit in the 70S ribosome.

This is one of the proteins that bind and probably mediate the attachment of the 5S RNA into the large ribosomal subunit, where it forms part of the central protuberance. In the 70S ribosome it contacts protein S13 of the 30S subunit (bridge B1b), connecting the 2 subunits; this bridge is implicated in subunit movement. Contacts the P site tRNA; the 5S rRNA and some of its associated proteins might help stabilize positioning of ribosome-bound tRNAs. This Anaeromyxobacter sp. (strain Fw109-5) protein is Large ribosomal subunit protein uL5.